The chain runs to 252 residues: Imidazole glycerol phosphate synthase subunit HisF (252 aa).

Active-site residues include Asp-11 and Asp-130.

The protein belongs to the HisA/HisF family. As to quaternary structure, heterodimer of HisH and HisF.

Its subcellular location is the cytoplasm. The enzyme catalyses 5-[(5-phospho-1-deoxy-D-ribulos-1-ylimino)methylamino]-1-(5-phospho-beta-D-ribosyl)imidazole-4-carboxamide + L-glutamine = D-erythro-1-(imidazol-4-yl)glycerol 3-phosphate + 5-amino-1-(5-phospho-beta-D-ribosyl)imidazole-4-carboxamide + L-glutamate + H(+). It functions in the pathway amino-acid biosynthesis; L-histidine biosynthesis; L-histidine from 5-phospho-alpha-D-ribose 1-diphosphate: step 5/9. In terms of biological role, IGPS catalyzes the conversion of PRFAR and glutamine to IGP, AICAR and glutamate. The HisF subunit catalyzes the cyclization activity that produces IGP and AICAR from PRFAR using the ammonia provided by the HisH subunit. This chain is Imidazole glycerol phosphate synthase subunit HisF, found in Staphylococcus aureus (strain MRSA252).